Reading from the N-terminus, the 255-residue chain is Taurine import ATP-binding protein TauB (255 aa).

The region spanning L2–A229 is the ABC transporter domain. G34–T41 serves as a coordination point for ATP.

It belongs to the ABC transporter superfamily. Taurine importer (TC 3.A.1.17.1) family. The complex is composed of two ATP-binding proteins (TauB), two transmembrane proteins (TauC) and a solute-binding protein (TauA).

It localises to the cell inner membrane. The enzyme catalyses taurine(out) + ATP + H2O = taurine(in) + ADP + phosphate + H(+). In terms of biological role, part of the ABC transporter complex TauABC involved in taurine import. Responsible for energy coupling to the transport system. This chain is Taurine import ATP-binding protein TauB, found in Yersinia pseudotuberculosis serotype I (strain IP32953).